Here is a 510-residue protein sequence, read N- to C-terminus: MIWHVQNENFILDSTRIFMKAFHLLLFHGSFIFPECILIFGLILLLMIDSTSDQKDIPWLYFISSTSLVMSITALLFRWREEPMISFSGNFQTNNFNEIFQFLILLCSTLCIPLSVEYIECTEMAITEFLLFVLTATLGGMFLCGANDSITIFVAPECFSLCSYLLSGYTKRDVRSNEATTKYLLMGGASSSILVHGFSWLYGSSGGEIELQEIVNGLIKTQMYNSPGISIALIFITVGIGFKLSPAPSHQWTPDVYEGSPTPVVAFLSVTSKVAASASATRIFDIPFYFSSNEWHLLLEILAILSMILGNLIAITQTSMKRMLAYSSIGQIGYVIIGIIVGDSNDGYASMITYMLFYISMNLGTFARIVSFGLRTGTDNIRDYAGLYTKDPFLALSSALCLLSLGGLPPLAGFFGKLHLFWCGWQAGLYFLVSIGLLTSVVSIYYYLKIIKLLMTGRNQEITPHVRNYRRSPLRSNNSIELSMIVCVIASTIPGISMNPIIAIAQDTLF.

The next 13 helical transmembrane spans lie at 24–44 (LLLFHGSFIFPECILIFGLIL), 57–77 (IPWLYFISSTSLVMSITALLF), 99–119 (IFQFLILLCSTLCIPLSVEYI), 124–144 (MAITEFLLFVLTATLGGMFLC), 150–170 (ITIFVAPECFSLCSYLLSGYT), 183–203 (YLLMGGASSSILVHGFSWLYG), 227–247 (PGISIALIFITVGIGFKLSPA), 295–315 (WHLLLEILAILSMILGNLIAI), 323–343 (MLAYSSIGQIGYVIIGIIVGD), 347–367 (GYASMITYMLFYISMNLGTFA), 395–415 (ALSSALCLLSLGGLPPLAGFF), 418–438 (LHLFWCGWQAGLYFLVSIGLL), and 484–504 (MIVCVIASTIPGISMNPIIAI).

Belongs to the complex I subunit 2 family. NDH is composed of at least 16 different subunits, 5 of which are encoded in the nucleus.

It is found in the plastid. Its subcellular location is the chloroplast thylakoid membrane. It carries out the reaction a plastoquinone + NADH + (n+1) H(+)(in) = a plastoquinol + NAD(+) + n H(+)(out). It catalyses the reaction a plastoquinone + NADPH + (n+1) H(+)(in) = a plastoquinol + NADP(+) + n H(+)(out). In terms of biological role, NDH shuttles electrons from NAD(P)H:plastoquinone, via FMN and iron-sulfur (Fe-S) centers, to quinones in the photosynthetic chain and possibly in a chloroplast respiratory chain. The immediate electron acceptor for the enzyme in this species is believed to be plastoquinone. Couples the redox reaction to proton translocation, and thus conserves the redox energy in a proton gradient. The polypeptide is NAD(P)H-quinone oxidoreductase subunit 2 B, chloroplastic (Liriodendron tulipifera (Tuliptree)).